Reading from the N-terminus, the 184-residue chain is Photosystem I assembly protein Ycf4 (184 aa).

Helical transmembrane passes span 19-39 and 57-77; these read ISNF…LLVG and IVFF…LFIS.

This sequence belongs to the Ycf4 family.

It localises to the plastid. Its subcellular location is the chloroplast thylakoid membrane. Functionally, seems to be required for the assembly of the photosystem I complex. The protein is Photosystem I assembly protein Ycf4 of Nicotiana tomentosiformis (Tobacco).